The sequence spans 370 residues: 5-hydroxytryptamine receptor 5B (370 aa).

The disordered stretch occupies residues 1–36 (MEVSNLSGATPGLAFPPGPESCSDSPSSGRSMGSTP). Topologically, residues 1–48 (MEVSNLSGATPGLAFPPGPESCSDSPSSGRSMGSTPGGLILPGREPPF) are extracellular. An N-linked (GlcNAc...) asparagine glycan is attached at Asn5. A compositionally biased stretch (low complexity) spans 20-36 (ESCSDSPSSGRSMGSTP). The helical transmembrane segment at 49–75 (SAFTVLVVTLLVLLIAATFLWNLLVLV) threads the bilayer. Topologically, residues 76–88 (TILRVRAFHRVPH) are cytoplasmic. A helical transmembrane segment spans residues 89–115 (NLVASTAVSDVLVAVLVMPLSLVSELS). At 116–127 (AGRRWQLGRSLC) the chain is on the extracellular side. Cys127 and Cys205 are joined by a disulfide. The helical transmembrane segment at 128-150 (HVWISFDVLCCTASIWNVAAIAL) threads the bilayer. Serotonin is bound at residue Asp134. Topologically, residues 151–168 (DRYWTITRHLQYTLRTRS) are cytoplasmic. The helical transmembrane segment at 169 to 189 (RASALMIAITWALSALIALAP) threads the bilayer. Over 190–211 (LLFGWGEAYDARLQRCQVSQEP) the chain is Extracellular. A helical membrane pass occupies residues 212 to 233 (SYAVFSTCGAFYLPLAVVLFVY). The Cytoplasmic segment spans residues 234–300 (WKIYKAAKFR…QKEKRAAMMV (67 aa)). Residues 301–325 (GILIGVFVLCWIPFFLTELISPLCA) traverse the membrane as a helical segment. Residues 326–327 (CS) lie on the Extracellular side of the membrane. A helical membrane pass occupies residues 328–352 (LPPIWKSIFLWLGYSNSFFNPLIYT). Topologically, residues 353-370 (AFNKNYNNAFKSLFTKQR) are cytoplasmic.

This sequence belongs to the G-protein coupled receptor 1 family. As to expression, expressed predominantly in the central nervous system; in the hippocampus, habenula, and the doral raphe.

The protein resides in the cell membrane. Its function is as follows. G-protein coupled receptor for 5-hydroxytryptamine (serotonin), a biogenic hormone that functions as a neurotransmitter, a hormone and a mitogen. Also functions as a receptor for ergot alkaloid derivatives and other psychoactive substances. Ligand binding causes a conformation change that triggers signaling via guanine nucleotide-binding proteins (G proteins) and modulates the activity of downstream effectors. Htr5b is coupled to G(i)/G(o) G alpha proteins and mediates inhibitory neurotransmission: signaling inhibits adenylate cyclase activity and activates a phosphatidylinositol-calcium second messenger system that regulates the release of Ca(2+) ions from intracellular stores. The chain is 5-hydroxytryptamine receptor 5B from Mus musculus (Mouse).